The sequence spans 286 residues: Spermidine/putrescine transport system permease protein PotB (286 aa).

Residues 1-13 lie on the Cytoplasmic side of the membrane; the sequence is MKIINNKFQKITV. Residues 14-33 traverse the membrane as a helical segment; sequence AIIFSWLIFFVLIPNLLVLA. Over 34–71 the chain is Periplasmic; the sequence is VSFLTRDGSNFYAFPITIENYTNLFNPLYAQVVWNSLS. One can recognise an ABC transmembrane type-1 domain in the interval 66–274; sequence VWNSLSMSGI…MALLIFVYYR (209 aa). A helical membrane pass occupies residues 72–91; that stretch reads MSGIATIICLLIGYPFAFMM. Topologically, residues 92 to 100 are cytoplasmic; that stretch reads SKIHPKYRP. A helical transmembrane segment spans residues 101–120; sequence LLLFLVVLPFWTNSLIRIYG. Residues 121–151 lie on the Periplasmic side of the membrane; that stretch reads MKVFLGVKGILNTMLIDMGILSAPIRILNTE. A helical transmembrane segment spans residues 152 to 171; sequence IAVIIGLVYLLLPFMILPLY. Topologically, residues 172 to 199 are cytoplasmic; sequence SAIEKLDNRLLEAARDLGANTFQRFFRV. Residues 200–219 traverse the membrane as a helical segment; that stretch reads ILPLTMPGIIAGCLLVLLPA. The Periplasmic segment spans residues 220-252; that stretch reads MGMFYVADLLGGAKVLLVGNVIKSEFLISRNWP. A helical transmembrane segment spans residues 253 to 272; that stretch reads FGSAVSIGLTVLMALLIFVY. The Cytoplasmic segment spans residues 273–286; it reads YRANKLLNRKVELE.

This sequence belongs to the binding-protein-dependent transport system permease family. CysTW subfamily.

The protein localises to the cell inner membrane. In terms of biological role, required for the activity of the bacterial periplasmic transport system of putrescine and spermidine. The sequence is that of Spermidine/putrescine transport system permease protein PotB (potB) from Haemophilus influenzae (strain ATCC 51907 / DSM 11121 / KW20 / Rd).